Here is a 377-residue protein sequence, read N- to C-terminus: Glutamate 5-kinase (377 aa).

Lysine 20 lines the ATP pocket. Positions 60, 147, and 159 each coordinate substrate. 179–180 is an ATP binding site; it reads SD. Residues 281-355 form the PUA domain; that stretch reads HGQLHLDAGA…GQSTSDLPEF (75 aa).

Belongs to the glutamate 5-kinase family.

The protein resides in the cytoplasm. It catalyses the reaction L-glutamate + ATP = L-glutamyl 5-phosphate + ADP. The protein operates within amino-acid biosynthesis; L-proline biosynthesis; L-glutamate 5-semialdehyde from L-glutamate: step 1/2. In terms of biological role, catalyzes the transfer of a phosphate group to glutamate to form L-glutamate 5-phosphate. This chain is Glutamate 5-kinase, found in Corynebacterium jeikeium (strain K411).